A 417-amino-acid chain; its full sequence is Serine/threonine-protein phosphatase 4 regulatory subunit 2 (417 aa).

Composition is skewed to polar residues over residues 140–149 (EKNNSNSLNR), 158–170 (NSPSYTERSNING), and 186–196 (APMTTNGLPES). The tract at residues 140-417 (EKNNSNSLNR…EVTDEPMEQD (278 aa)) is disordered. Position 159 is a phosphoserine (S159). Residues 197 to 213 (TDSKEANLQQNEEKNHS) show a composition bias toward basic and acidic residues. Positions 214–226 (DSSTSESEVSSVS) are enriched in low complexity. S226 carries the phosphoserine modification. The segment covering 231–258 (KHPDEDAVEAEGHEVKRLRFDKEGEVRE) has biased composition (basic and acidic residues). A compositionally biased stretch (polar residues) spans 259–269 (TASQTTSSEIS). The span at 283–297 (QDKDKDSRCTRQHCT) shows a compositional bias: basic and acidic residues. The segment covering 298–311 (EEDEEEDEEEEEES) has biased composition (acidic residues). The segment covering 318 to 327 (MIPERKNQEK) has biased composition (basic and acidic residues). The span at 338–350 (ETSEENNQMEESD) shows a compositional bias: acidic residues. Positions 353-363 (QAEKDLLHSEG) are enriched in basic and acidic residues. Residues 366–375 (NEGPVSSSSS) show a composition bias toward low complexity. The span at 385 to 399 (GSNSSKTGEILSESS) shows a compositional bias: polar residues. Residues 400–417 (MENDDEATEVTDEPMEQD) show a composition bias toward acidic residues.

It belongs to the PPP4R2 family. Serine/threonine-protein phosphatase 4 (PP4) occurs in different assemblies of the catalytic and one or more regulatory subunits. Component of the PP4 complexes PPP4C-PPP4R2, PPP4C-PPP4R2-PPP4R3A and PPP4C-PPP4R2-PPP4R3B. The PPP4C-PPP4R2 complex appears to be a tetramer composed of 2 molecules of PPP4C and 2 molecules of PPP4R2. Interacts with DDX20/GEMIN3 and GEMIN4. Interacts with RPA2; this DNA damage-dependent interaction recruits PPP4C leading to RPA2 dephosphorylation. Widely expressed.

The protein resides in the cytoplasm. It is found in the cytoskeleton. It localises to the microtubule organizing center. The protein localises to the centrosome. Its subcellular location is the nucleus. Its function is as follows. Regulatory subunit of serine/threonine-protein phosphatase 4 (PP4). May regulate the activity of PPP4C at centrosomal microtubule organizing centers. Its interaction with the SMN complex leads to enhance the temporal localization of snRNPs, suggesting a role of PPP4C in maturation of spliceosomal snRNPs. The PPP4C-PPP4R2-PPP4R3A PP4 complex specifically dephosphorylates H2AX phosphorylated on 'Ser-140' (gamma-H2AX) generated during DNA replication and required for DNA double strand break repair. Mediates RPA2 dephosphorylation by recruiting PPP4C to RPA2 in a DNA damage-dependent manner. RPA2 dephosphorylation is required for the efficient RPA2-mediated recruitment of RAD51 to chromatin following double strand breaks, an essential step for DNA repair. In Homo sapiens (Human), this protein is Serine/threonine-protein phosphatase 4 regulatory subunit 2 (PPP4R2).